We begin with the raw amino-acid sequence, 777 residues long: Biotin sulfoxide reductase (777 aa).

Ser-148 contributes to the Mo-bis(molybdopterin guanine dinucleotide) binding site.

The protein belongs to the prokaryotic molybdopterin-containing oxidoreductase family. Mo-bis(molybdopterin guanine dinucleotide) is required as a cofactor.

The enzyme catalyses [thioredoxin]-disulfide + L-methionine + H2O = L-methionine (S)-S-oxide + [thioredoxin]-dithiol. In terms of biological role, this enzyme may serve as a scavenger, allowing the cell to utilize biotin sulfoxide as a biotin source. It reduces a spontaneous oxidation product of biotin, D-biotin D-sulfoxide (BSO or BDS), back to biotin. Also exhibits methionine-(S)-sulfoxide (Met-S-SO) reductase activity, acting specifically on the (S) enantiomer in the free, but not the protein-bound form. It thus plays a role in assimilation of oxidized methionines. In Escherichia coli (strain K12), this protein is Biotin sulfoxide reductase (bisC).